Consider the following 551-residue polypeptide: uncharacterized protein (551 aa).

Over residues 1–11 (MRRVSLPNQLN) the composition is skewed to polar residues. 2 disordered regions span residues 1–22 (MRRV…TRGE) and 523–551 (CDPT…QAFH). Residues 12–22 (ETRRRSPTRGE) show a composition bias toward basic and acidic residues. Residues 537–551 (QQPQQQQQQQQQAFH) are compositionally biased toward low complexity.

It to Synechocystis PCC 6803 sll0335 and to M.tuberculosis Rv2567.

This is an uncharacterized protein from Mycobacterium bovis (strain ATCC BAA-935 / AF2122/97).